The sequence spans 698 residues: Polyribonucleotide nucleotidyltransferase (698 aa).

Residues D488 and D494 each contribute to the Mg(2+) site. The KH domain occupies 555–614 (PRLLTIRIDPDKIRDVIGKGGATIRALTEETGTTIDISDDGKVTIASADKAAADEARRRI). Positions 624 to 692 (GTVYEGKVSK…RQGRIRLSMK (69 aa)) constitute an S1 motif domain.

This sequence belongs to the polyribonucleotide nucleotidyltransferase family. Component of the RNA degradosome, which is a multiprotein complex involved in RNA processing and mRNA degradation. Requires Mg(2+) as cofactor.

The protein resides in the cytoplasm. It catalyses the reaction RNA(n+1) + phosphate = RNA(n) + a ribonucleoside 5'-diphosphate. In terms of biological role, involved in mRNA degradation. Catalyzes the phosphorolysis of single-stranded polyribonucleotides processively in the 3'- to 5'-direction. This is Polyribonucleotide nucleotidyltransferase from Alkalilimnicola ehrlichii (strain ATCC BAA-1101 / DSM 17681 / MLHE-1).